Here is a 472-residue protein sequence, read N- to C-terminus: Eukaryotic translation initiation factor 2 subunit 3, X-linked (472 aa).

Ala-2 bears the N-acetylalanine mark. Ser-16 carries the phosphoserine modification. In terms of domain architecture, tr-type G spans 39-248 (QATINIGTIG…IVKKIPVPPR (210 aa)). Residues 48 to 55 (GHVAHGKS) form a G1 region. 51–56 (AHGKST) is a GTP binding site. A G2 region spans residues 76–80 (NITIK). Positions 134 to 137 (DCPG) are G3. GTP contacts are provided by residues 190-193 (NKID) and 225-227 (SAQ). A G4 region spans residues 190–193 (NKID). Residues 225 to 227 (SAQ) are G5. An interacts with Cdc123 region spans residues 457–469 (GQIRRGVTIKPTV).

This sequence belongs to the TRAFAC class translation factor GTPase superfamily. Classic translation factor GTPase family. EIF2G subfamily. Eukaryotic translation initiation factor 2 eIF2 is a heterotrimeric complex composed of an alpha (EIF2S1), a beta (EIF2S2) and a gamma (EIF2S3) chain. eIF2 is member of the 43S pre-initiation complex (43S PIC). Interacts (via C-terminus) with CDC123; the interaction is direct. In terms of tissue distribution, widely expressed. In the brain, high mRNA levels are observed in specific regions, including the habenula, anterodorsal thalamic nucleus, hippocampus, hypothalamus, and cerebellum. Also expressed in the embryonic brain. There is a differential expression between males and females, which is tissue-specific. Females tend to have higher expression levels than males in the brain (cortex, hippocampus and paraventricular nucleus, but not in the habenula), as well as in other tissues. The up-regulation observed in females at the mRNA level may be due to the presence of 2 active copies of the gene.

The protein localises to the cytoplasm. It localises to the cytosol. It carries out the reaction GTP + H2O = GDP + phosphate + H(+). Its function is as follows. Member of the eIF2 complex that functions in the early steps of protein synthesis by forming a ternary complex with GTP and initiator tRNA. This complex binds to a 40S ribosomal subunit, followed by mRNA binding to form the 43S pre-initiation complex (43S PIC). Junction of the 60S ribosomal subunit to form the 80S initiation complex is preceded by hydrolysis of the GTP bound to eIF2 and release of an eIF2-GDP binary complex. In order for eIF2 to recycle and catalyze another round of initiation, the GDP bound to eIF2 must exchange with GTP by way of a reaction catalyzed by eIF-2B. Along with its paralog on chromosome Y, may contribute to spermatogenesis up to the round spermatid stage. The chain is Eukaryotic translation initiation factor 2 subunit 3, X-linked (Eif2s3x) from Mus musculus (Mouse).